The following is a 379-amino-acid chain: Mannitol-1-phosphate 5-dehydrogenase (379 aa).

3-14 (ALHFGAGNIGRG) lines the NAD(+) pocket.

The protein belongs to the mannitol dehydrogenase family.

The catalysed reaction is D-mannitol 1-phosphate + NAD(+) = beta-D-fructose 6-phosphate + NADH + H(+). This is Mannitol-1-phosphate 5-dehydrogenase from Actinobacillus pleuropneumoniae serotype 3 (strain JL03).